The chain runs to 262 residues: 3-methyl-2-oxobutanoate hydroxymethyltransferase (262 aa).

Mg(2+) contacts are provided by Asp42 and Asp81. Residues 42–43 (DS), Asp81, and Lys110 each bind 3-methyl-2-oxobutanoate. Position 112 (Glu112) interacts with Mg(2+). Residue Glu180 is the Proton acceptor of the active site.

This sequence belongs to the PanB family. Homodecamer; pentamer of dimers. The cofactor is Mg(2+).

The protein localises to the cytoplasm. The catalysed reaction is 3-methyl-2-oxobutanoate + (6R)-5,10-methylene-5,6,7,8-tetrahydrofolate + H2O = 2-dehydropantoate + (6S)-5,6,7,8-tetrahydrofolate. It functions in the pathway cofactor biosynthesis; (R)-pantothenate biosynthesis; (R)-pantoate from 3-methyl-2-oxobutanoate: step 1/2. In terms of biological role, catalyzes the reversible reaction in which hydroxymethyl group from 5,10-methylenetetrahydrofolate is transferred onto alpha-ketoisovalerate to form ketopantoate. This is 3-methyl-2-oxobutanoate hydroxymethyltransferase from Legionella pneumophila (strain Corby).